Here is a 382-residue protein sequence, read N- to C-terminus: GDP-mannose transporter (382 aa).

The Cytoplasmic portion of the chain corresponds to 1–40; the sequence is MADDKKTNEYTIEMDKLDHGNKDFEAPAPAVRPRGPPVAQ. Residues 41-61 form a helical membrane-spanning segment; it reads LANNPILPVLAYCGSSILMTV. Residues 62–71 are Lumenal-facing; that stretch reads MNKYVLSGRD. The chain crosses the membrane as a helical span at residues 72-92; it reads FNLNFFLLCVQSIVCIVAIQT. The Cytoplasmic segment spans residues 93 to 110; that stretch reads CKVSKLITYRDFNSDEAK. A helical membrane pass occupies residues 111–127; sequence KWFPITLLLIGMIYTGS. Over 128-134 the chain is Lumenal; that stretch reads KALQYLS. Residues 135–151 traverse the membrane as a helical segment; the sequence is IPVYTIFKNLTIILIAY. Residues 152-160 lie on the Cytoplasmic side of the membrane; it reads GEVLWFGGS. Residues 161–182 form a helical membrane-spanning segment; it reads VTGLTLFSFGLMVLSSIIAAWA. Topologically, residues 183–200 are lumenal; sequence DIKHAVESSGDATAKVST. A helical membrane pass occupies residues 201 to 221; that stretch reads LNAGYIWMLINCLCTSSYVLG. At 222 to 233 the chain is on the cytoplasmic side; sequence MRKRIKLTNFKD. Residues 234 to 254 traverse the membrane as a helical segment; sequence FDTMFYNNLLSIPVLLVLTFL. Residues 255–274 lie on the Lumenal side of the membrane; it reads MEDWSSANIARNFPSTDRNG. A helical transmembrane segment spans residues 275 to 295; the sequence is ILFAMILSGLSSVFISYTSAW. At 296-303 the chain is on the cytoplasmic side; sequence CVRVTSST. Residues 304 to 324 traverse the membrane as a helical segment; that stretch reads TYSMVGALNKLPIALSGLIFF. Topologically, residues 325–327 are lumenal; sequence DAP. Residues 328–348 form a helical membrane-spanning segment; the sequence is VTFPSVSAIVVGFISGIVYAV. Residues 349–382 lie on the Cytoplasmic side of the membrane; it reads AKIKQSAKPKTGVLPMSNPPVSASSQSMRDSLRS. A disordered region spans residues 358-382; sequence KTGVLPMSNPPVSASSQSMRDSLRS. Positions 367-382 are enriched in polar residues; it reads PPVSASSQSMRDSLRS.

Belongs to the TPT transporter family. SLC35D subfamily. In terms of assembly, homooligomer.

Its subcellular location is the golgi apparatus membrane. The protein localises to the cytoplasmic vesicle membrane. It localises to the endoplasmic reticulum membrane. In terms of biological role, involved in the import of GDP-mannose from the cytoplasm into the Golgi lumen. The chain is GDP-mannose transporter (gmt1) from Aspergillus fumigatus (strain CBS 144.89 / FGSC A1163 / CEA10) (Neosartorya fumigata).